Consider the following 1159-residue polypeptide: Cation channel sperm-associated auxiliary subunit gamma (1159 aa).

Positions 1–35 (MCGPAMFPAGPRWPRVRVLQVLWALLAVLLASRRL) are cleaved as a signal peptide. The Extracellular segment spans residues 36 to 1065 (WAIKDFEECT…IHGLPLSPKR (1030 aa)). 2 cysteine pairs are disulfide-bonded: C44/C105 and C159/C165. The N-linked (GlcNAc...) asparagine glycan is linked to N102. N177 is a glycosylation site (N-linked (GlcNAc...) asparagine). C288 and C343 are joined by a disulfide. N355 carries an N-linked (GlcNAc...) asparagine glycan. C394 and C402 form a disulfide bridge. Residues N426 and N574 are each glycosylated (N-linked (GlcNAc...) asparagine). Intrachain disulfides connect C638/C860, C806/C834, C882/C1046, C909/C918, and C1010/C1016. Residues 1066-1087 (ALFILMVSLSVFVGLVIFYIAF) form a helical membrane-spanning segment. Over 1088-1159 (CLLWPLVVKG…KEAVERQLMT (72 aa)) the chain is Cytoplasmic. Residues 1138-1159 (FSSRMTEDKAEPKEAVERQLMT) form a disordered region. A compositionally biased stretch (basic and acidic residues) spans 1142–1159 (MTEDKAEPKEAVERQLMT).

Belongs to the CATSPERG family. As to quaternary structure, component of the CatSper complex or CatSpermasome composed of the core pore-forming members CATSPER1, CATSPER2, CATSPER3 and CATSPER4 as well as auxiliary members CATSPERB, CATSPERG, CATSPERD, CATSPERE, CATSPERZ, SCLO6C1, TMEM249, TMEM262 and EFCAB9. HSPA1 may be an additional auxiliary complex member. The core complex members CATSPER1, CATSPER2, CATSPER3 and CATSPER4 form a heterotetrameric channel. The auxiliary CATSPERB, CATSPERG, CATSPERD and CATSPERE subunits form a pavilion-like structure over the pore which stabilizes the complex through interactions with CATSPER4, CATSPER3, CATSPER1 and CATSPER2 respectively. TMEM262/CATSPERH interacts with CATSPERB, further stabilizing the complex. C2CD6/CATSPERT interacts at least with CATSPERD and is required for targeting the CatSper complex in the flagellar membrane.

Its subcellular location is the cell projection. The protein localises to the cilium. It localises to the flagellum membrane. Functionally, auxiliary component of the CatSper complex, a complex involved in sperm cell hyperactivation. Sperm cell hyperactivation is needed for sperm motility which is essential late in the preparation of sperm for fertilization. In Macaca fascicularis (Crab-eating macaque), this protein is Cation channel sperm-associated auxiliary subunit gamma.